Reading from the N-terminus, the 87-residue chain is Retinal rod rhodopsin-sensitive cGMP 3',5'-cyclic phosphodiesterase subunit gamma (87 aa).

Met-1 is subject to N-acetylmethionine. A compositionally biased stretch (basic and acidic residues) spans 1–12; that stretch reads MNLEPPKAEIRS. The tract at residues 1–55 is disordered; it reads MNLEPPKAEIRSATRVMGGPVTPRKGPPKFKQRQTRQFKSKPPKKGVQGFGDDIP. The segment covering 26 to 44 has biased composition (basic residues); the sequence is GPPKFKQRQTRQFKSKPPK.

This sequence belongs to the rod/cone cGMP-PDE gamma subunit family. In terms of assembly, oligomer composed of two catalytic chains (alpha and beta), an inhibitory chain (gamma) and the delta chain.

The enzyme catalyses 3',5'-cyclic GMP + H2O = GMP + H(+). Its function is as follows. Participates in processes of transmission and amplification of the visual signal. cGMP-PDEs are the effector molecules in G-protein-mediated phototransduction in vertebrate rods and cones. The protein is Retinal rod rhodopsin-sensitive cGMP 3',5'-cyclic phosphodiesterase subunit gamma (PDE6G) of Bos taurus (Bovine).